The following is an 874-amino-acid chain: S-layer protein (874 aa).

Residues 1-30 form the signal peptide; that stretch reads MAKTNSYKKVIAGTMTAAMVAGVVSPVAAA. 3 consecutive SLH domains span residues 31 to 93, 94 to 151, and 152 to 214; these read GKSF…NAQP, SFKD…KVDG, and TLVT…ENSD.

The protein resides in the secreted. It is found in the cell wall. The protein localises to the S-layer. Its function is as follows. The S-layer is a paracrystalline mono-layered assembly of proteins which coat the surface of bacteria. The protein is S-layer protein of Bacillus licheniformis.